Reading from the N-terminus, the 91-residue chain is uncharacterized protein (91 aa).

A run of 2 helical transmembrane segments spans residues 22–42 (WPVIAVGALAWLVAAVAAFVV) and 53–73 (VAGLATGLLGTTIFVWQLAAA).

The protein resides in the cell membrane. This is an uncharacterized protein from Mycobacterium bovis (strain ATCC BAA-935 / AF2122/97).